Reading from the N-terminus, the 132-residue chain is D-ribose pyranase (132 aa).

Catalysis depends on His20, which acts as the Proton donor. Substrate is bound by residues Asp28, His99, and 121-123 (YSN).

It belongs to the RbsD / FucU family. RbsD subfamily. In terms of assembly, homodecamer.

The protein localises to the cytoplasm. It catalyses the reaction beta-D-ribopyranose = beta-D-ribofuranose. It functions in the pathway carbohydrate metabolism; D-ribose degradation; D-ribose 5-phosphate from beta-D-ribopyranose: step 1/2. Functionally, catalyzes the interconversion of beta-pyran and beta-furan forms of D-ribose. This is D-ribose pyranase from Streptococcus agalactiae serotype III (strain NEM316).